Reading from the N-terminus, the 269-residue chain is Putative phosphoenolpyruvate synthase regulatory protein (269 aa).

Residue 149–156 (GVSRSGKT) coordinates ADP.

The protein belongs to the pyruvate, phosphate/water dikinase regulatory protein family. PSRP subfamily.

It carries out the reaction [pyruvate, water dikinase] + ADP = [pyruvate, water dikinase]-phosphate + AMP + H(+). It catalyses the reaction [pyruvate, water dikinase]-phosphate + phosphate + H(+) = [pyruvate, water dikinase] + diphosphate. Functionally, bifunctional serine/threonine kinase and phosphorylase involved in the regulation of the phosphoenolpyruvate synthase (PEPS) by catalyzing its phosphorylation/dephosphorylation. This is Putative phosphoenolpyruvate synthase regulatory protein from Pseudoalteromonas translucida (strain TAC 125).